A 127-amino-acid chain; its full sequence is Large ribosomal subunit protein bL12 (127 aa).

It belongs to the bacterial ribosomal protein bL12 family. Homodimer. Part of the ribosomal stalk of the 50S ribosomal subunit. Forms a multimeric L10(L12)X complex, where L10 forms an elongated spine to which 2 to 4 L12 dimers bind in a sequential fashion. Binds GTP-bound translation factors.

Functionally, forms part of the ribosomal stalk which helps the ribosome interact with GTP-bound translation factors. Is thus essential for accurate translation. This is Large ribosomal subunit protein bL12 from Rhizobium etli (strain ATCC 51251 / DSM 11541 / JCM 21823 / NBRC 15573 / CFN 42).